The primary structure comprises 129 residues: Ribonuclease P protein component (129 aa).

The protein belongs to the RnpA family. Consists of a catalytic RNA component (M1 or rnpB) and a protein subunit.

It carries out the reaction Endonucleolytic cleavage of RNA, removing 5'-extranucleotides from tRNA precursor.. Its function is as follows. RNaseP catalyzes the removal of the 5'-leader sequence from pre-tRNA to produce the mature 5'-terminus. It can also cleave other RNA substrates such as 4.5S RNA. The protein component plays an auxiliary but essential role in vivo by binding to the 5'-leader sequence and broadening the substrate specificity of the ribozyme. This Corynebacterium jeikeium (strain K411) protein is Ribonuclease P protein component.